The following is a 1658-amino-acid chain: Cortactin-binding protein 2 (1658 aa).

Disordered stretches follow at residues 1–24, 203–235, 348–437, 451–475, and 495–612; these read MATD…GATA, KTKT…SEFD, GAAL…LHPG, GNAN…SPTS, and RFTS…PPKP. Residues 119–276 adopt a coiled-coil conformation; sequence RKMQERMSTQ…EQLKRGNDSK (158 aa). The segment covering 214-235 has biased composition (basic and acidic residues); sequence SAEKRRSTEMEAQMEKQLSEFD. A compositionally biased stretch (low complexity) spans 385–394; it reads GPSAGSASST. The segment covering 399–418 has biased composition (polar residues); that stretch reads NSTAPPTVQTPGIAPQSYSQ. Arg-495 is subject to Asymmetric dimethylarginine. Residues 509-520 show a composition bias toward low complexity; sequence AAPTGDGGTCPP. The span at 580–590 shows a compositional bias: polar residues; it reads TMASPPSSLPQ. 6 ANK repeats span residues 706-736, 740-769, 773-802, 806-835, 839-868, and 909-939; these read GRPT…DINY, DGHS…QVNA, NGFT…NINH, EGQT…DRSV, DGWT…PACR, and EGWT…EPER. A disordered region spans residues 1448–1478; it reads ESGAWRKVSTSPRKKSGRFSPPSWNKPGLSE. The residue at position 1521 (Ser-1521) is a Phosphoserine. Disordered regions lie at residues 1538–1595 and 1611–1642; these read RSES…NSQS and PRSK…NTKE. The segment covering 1539–1558 has biased composition (basic and acidic residues); the sequence is SESDISKIADSRDDLRRFDG. Polar residues-rich tracts occupy residues 1559–1569 and 1581–1595; these read SRNNPAFSTVN and PLSS…NSQS. Positions 1619 to 1633 are enriched in low complexity; the sequence is SQNTKRSSSSSNTRQ.

Interacts with CTTN/cortactin SH3 domain. Interacts with STRN, STRN4/zinedin and MOB4/phocein; this interactions mediate the association with the STRIPAK core complex and may regulate dendritic spine distribution of the STRIPAK complex in hippocampal neurons. Activation of glutamate receptors weakens the interaction with STRN and STRN4.

Its subcellular location is the cytoplasm. The protein localises to the cell cortex. The protein resides in the cell projection. It is found in the dendritic spine. In terms of biological role, regulates the dendritic spine distribution of CTTN/cortactin in hippocampal neurons, and thus controls dendritic spinogenesis and dendritic spine maintenance. Associates with the striatin-interacting phosphatase and kinase (STRIPAK) core complex to regulate dendritic spine distribution of the STRIPAK complex in hippocampal neurons. This Neofelis nebulosa (Clouded leopard) protein is Cortactin-binding protein 2 (CTTNBP2).